Reading from the N-terminus, the 164-residue chain is Small ribosomal subunit protein uS5 (164 aa).

The S5 DRBM domain occupies 10–73; sequence LEERVVAVNR…DDAKKNLIEV (64 aa).

Belongs to the universal ribosomal protein uS5 family. In terms of assembly, part of the 30S ribosomal subunit. Contacts proteins S4 and S8.

Its function is as follows. With S4 and S12 plays an important role in translational accuracy. In terms of biological role, located at the back of the 30S subunit body where it stabilizes the conformation of the head with respect to the body. This chain is Small ribosomal subunit protein uS5, found in Streptococcus pneumoniae serotype 2 (strain D39 / NCTC 7466).